The following is a 355-amino-acid chain: UDP-N-acetylglucosamine--N-acetylmuramyl-(pentapeptide) pyrophosphoryl-undecaprenol N-acetylglucosamine transferase (355 aa).

Residues 14–16 (TGG), Asn123, Arg164, Ser190, and Gln284 each bind UDP-N-acetyl-alpha-D-glucosamine.

This sequence belongs to the glycosyltransferase 28 family. MurG subfamily.

It localises to the cell inner membrane. It catalyses the reaction di-trans,octa-cis-undecaprenyl diphospho-N-acetyl-alpha-D-muramoyl-L-alanyl-D-glutamyl-meso-2,6-diaminopimeloyl-D-alanyl-D-alanine + UDP-N-acetyl-alpha-D-glucosamine = di-trans,octa-cis-undecaprenyl diphospho-[N-acetyl-alpha-D-glucosaminyl-(1-&gt;4)]-N-acetyl-alpha-D-muramoyl-L-alanyl-D-glutamyl-meso-2,6-diaminopimeloyl-D-alanyl-D-alanine + UDP + H(+). It participates in cell wall biogenesis; peptidoglycan biosynthesis. Its function is as follows. Cell wall formation. Catalyzes the transfer of a GlcNAc subunit on undecaprenyl-pyrophosphoryl-MurNAc-pentapeptide (lipid intermediate I) to form undecaprenyl-pyrophosphoryl-MurNAc-(pentapeptide)GlcNAc (lipid intermediate II). In Synechocystis sp. (strain ATCC 27184 / PCC 6803 / Kazusa), this protein is UDP-N-acetylglucosamine--N-acetylmuramyl-(pentapeptide) pyrophosphoryl-undecaprenol N-acetylglucosamine transferase.